The following is a 478-amino-acid chain: MAAKGISTIGAASRSLSSSLMAAAKEPDVENLRLIEELTSNVDAVQERVLAEILGRNADAEYLDKCGLDASDTDRATFRAKVPVASYDDLKPYVKRIANGDRSPILSTHPIIEFFTSSGTSAGERKLMPIVTDEMARREVLSSLATSVLNVYVPGLHTGKGLYFLFARSETKTPGGLTAQPALTSVYKSEHFKRAYAYTSPMAAILCEDASQSMYAQMLCGLCQRHDVLRVGAVFAAALVRAIRFLQLNWAQLAADIETGELNPRVTDPSDRECSRGDWTGIVTRLWPKTKCLNVVVTGVMAQYIPTLQYYSGGLPIVSGMYASSECFFGLNLRPLCGPSEVSYTIMPNTAYFEFLPVGEAVDASNLVELARVEDGREYEVVVTTYAGLNRYRVGDVLCVTGFHNAAPQFRFVRRQSVLLSIEADKTDEAELQRAVERASSALLRPRGASIVEYTSRACTERVPGHFSPALPHWTLAP.

Belongs to the IAA-amido conjugating enzyme family.

Its function is as follows. May catalyze the synthesis of indole-3-acetic acid (IAA)-amino acid conjugates, providing a mechanism for the plant to cope with the presence of excess auxin. In Oryza sativa subsp. japonica (Rice), this protein is Putative indole-3-acetic acid-amido synthetase GH3.10 (GH3.10).